Consider the following 261-residue polypeptide: Ribosome biogenesis protein C3_06160C_A (261 aa).

The disordered stretch occupies residues 1 to 38; the sequence is MPQNEYIEQHIKKHGRRLDYEERKRKKEAREGHRVAKD. 2 short sequence motifs (nuclear localization signal) span residues 11 to 18 and 51 to 58; these read IKKHGRRL and AKKRYAEK. Positions 17-37 are enriched in basic and acidic residues; the sequence is RLDYEERKRKKEAREGHRVAK. Positions 59 to 85 are disordered; the sequence is VAMKKKIKAHQESKVKGPSTPKAEDGE.

This sequence belongs to the eukaryotic ribosomal protein eS8 family. Ribosome biogenesis protein NSA2 subfamily. Component of the pre-66S ribosomal particle. Interacts with NOP7 and RRP1. Interacts with RSA4 (via WD repeats).

It localises to the nucleus. The protein localises to the nucleolus. Its function is as follows. Involved in the biogenesis of the 60S ribosomal subunit. May play a part in the quality control of pre-60S particles. The polypeptide is Ribosome biogenesis protein C3_06160C_A (Candida albicans (strain SC5314 / ATCC MYA-2876) (Yeast)).